The chain runs to 577 residues: Arginine--tRNA ligase (577 aa).

Positions 122–132 match the 'HIGH' region motif; it reads PNVAKEMHVGH.

The protein belongs to the class-I aminoacyl-tRNA synthetase family. Monomer.

The protein resides in the cytoplasm. It catalyses the reaction tRNA(Arg) + L-arginine + ATP = L-arginyl-tRNA(Arg) + AMP + diphosphate. This Escherichia coli O7:K1 (strain IAI39 / ExPEC) protein is Arginine--tRNA ligase.